Consider the following 328-residue polypeptide: Tetraacyldisaccharide 4'-kinase (328 aa).

ATP is bound at residue 55-62; it reads TAGGNGKT.

This sequence belongs to the LpxK family.

It catalyses the reaction a lipid A disaccharide + ATP = a lipid IVA + ADP + H(+). Its pathway is glycolipid biosynthesis; lipid IV(A) biosynthesis; lipid IV(A) from (3R)-3-hydroxytetradecanoyl-[acyl-carrier-protein] and UDP-N-acetyl-alpha-D-glucosamine: step 6/6. Its function is as follows. Transfers the gamma-phosphate of ATP to the 4'-position of a tetraacyldisaccharide 1-phosphate intermediate (termed DS-1-P) to form tetraacyldisaccharide 1,4'-bis-phosphate (lipid IVA). This chain is Tetraacyldisaccharide 4'-kinase, found in Escherichia fergusonii (strain ATCC 35469 / DSM 13698 / CCUG 18766 / IAM 14443 / JCM 21226 / LMG 7866 / NBRC 102419 / NCTC 12128 / CDC 0568-73).